A 138-amino-acid chain; its full sequence is Ribosomal RNA large subunit methyltransferase H (138 aa).

Residues G86 and 105–110 (LSPLTF) contribute to the S-adenosyl-L-methionine site.

Belongs to the RNA methyltransferase RlmH family. In terms of assembly, homodimer.

Its subcellular location is the cytoplasm. It carries out the reaction pseudouridine(1915) in 23S rRNA + S-adenosyl-L-methionine = N(3)-methylpseudouridine(1915) in 23S rRNA + S-adenosyl-L-homocysteine + H(+). Functionally, specifically methylates the pseudouridine at position 1915 (m3Psi1915) in 23S rRNA. This Prochlorococcus marinus (strain MIT 9215) protein is Ribosomal RNA large subunit methyltransferase H.